Reading from the N-terminus, the 401-residue chain is Enoyl-[acyl-carrier-protein] reductase [NADH] 1 (401 aa).

NAD(+) contacts are provided by residues G48–Y53, F74–E75, D111–A112, and L139–A140. Y225 contributes to the substrate binding site. Y235 serves as the catalytic Proton donor. NAD(+) contacts are provided by residues K244 and V273–T275.

This sequence belongs to the TER reductase family. As to quaternary structure, monomer.

It catalyses the reaction a 2,3-saturated acyl-[ACP] + NAD(+) = a (2E)-enoyl-[ACP] + NADH + H(+). The catalysed reaction is a 2,3-saturated acyl-CoA + NAD(+) = a (2E)-enoyl-CoA + NADH + H(+). The enzyme catalyses (2E)-butenoyl-[ACP] + NADH + H(+) = butanoyl-[ACP] + NAD(+). It carries out the reaction butanoyl-CoA + NAD(+) = (2E)-butenoyl-CoA + NADH + H(+). The protein operates within lipid metabolism; fatty acid biosynthesis. With respect to regulation, weakly inhibited by triclosan. Functionally, involved in the final reduction of the elongation cycle of fatty acid synthesis (FAS II). Catalyzes the NADH-dependent reduction of a carbon-carbon double bond in an enoyl moiety that is covalently linked to an acyl carrier protein (ACP). It can use both crotonyl-CoA and crotonyl-ACP. This Vibrio cholerae serotype O1 (strain ATCC 39315 / El Tor Inaba N16961) protein is Enoyl-[acyl-carrier-protein] reductase [NADH] 1.